Reading from the N-terminus, the 290-residue chain is Transposon Ty3-I Gag polyprotein (290 aa).

Serine 2 carries the post-translational modification N-acetylserine. The segment at 265 to 282 (RLCFYCKKEGHRLNECRA) adopts a CCHC-type zinc-finger fold.

It localises to the cytoplasm. Capsid protein (CA) is the structural component of the virus-like particle (VLP), forming the shell that encapsulates the retrotransposons dimeric RNA genome. Its function is as follows. Nucleocapsid protein p9 (NC) forms the nucleocore that coats the retro-elements dimeric RNA. Binds these RNAs through its zinc fingers. Promotes primer tRNA(i)-Met annealing to the multipartite primer-binding site (PBS), dimerization of Ty3 RNA and initiation of reverse transcription. In Saccharomyces cerevisiae (strain ATCC 204508 / S288c) (Baker's yeast), this protein is Transposon Ty3-I Gag polyprotein (TY3A-I).